We begin with the raw amino-acid sequence, 202 residues long: Large ribosomal subunit protein bL9 (202 aa).

The segment at 176–202 (AAGEFFDPDAQHDDEPAAEDDQNAEEK) is disordered. Residues 191-202 (PAAEDDQNAEEK) show a composition bias toward acidic residues.

Belongs to the bacterial ribosomal protein bL9 family.

Functionally, binds to the 23S rRNA. This Nitrobacter winogradskyi (strain ATCC 25391 / DSM 10237 / CIP 104748 / NCIMB 11846 / Nb-255) protein is Large ribosomal subunit protein bL9.